Reading from the N-terminus, the 241-residue chain is Uridylate kinase (241 aa).

Residue 12-15 (KISG) coordinates ATP. Positions 20 to 25 (GDKGNG) are involved in allosteric activation by GTP. Gly54 is a binding site for UMP. ATP-binding residues include Gly55 and Arg59. UMP is bound by residues Asp74 and 135-142 (TGNPYFST). The ATP site is built by Asn163, Tyr169, and Asp172.

The protein belongs to the UMP kinase family. Homohexamer.

The protein localises to the cytoplasm. The enzyme catalyses UMP + ATP = UDP + ADP. Its pathway is pyrimidine metabolism; CTP biosynthesis via de novo pathway; UDP from UMP (UMPK route): step 1/1. With respect to regulation, allosterically activated by GTP. Inhibited by UTP. Functionally, catalyzes the reversible phosphorylation of UMP to UDP. In Lactobacillus acidophilus (strain ATCC 700396 / NCK56 / N2 / NCFM), this protein is Uridylate kinase.